Consider the following 113-residue polypeptide: Large ribosomal subunit protein bL17 (113 aa).

This sequence belongs to the bacterial ribosomal protein bL17 family. Part of the 50S ribosomal subunit. Contacts protein L32.

The sequence is that of Large ribosomal subunit protein bL17 from Clostridium kluyveri (strain NBRC 12016).